Reading from the N-terminus, the 94-residue chain is Large ribosomal subunit protein bL31 (94 aa).

The tract at residues 64–94 (KYGMANPDEDSTKNTKSSKKETSEDSSSKGS) is disordered. The segment covering 73–94 (DSTKNTKSSKKETSEDSSSKGS) has biased composition (basic and acidic residues).

It belongs to the bacterial ribosomal protein bL31 family. Type A subfamily. Part of the 50S ribosomal subunit.

In terms of biological role, binds the 23S rRNA. The sequence is that of Large ribosomal subunit protein bL31 from Prochlorococcus marinus (strain SARG / CCMP1375 / SS120).